The sequence spans 114 residues: Monothiol glutaredoxin-S8 (114 aa).

In terms of domain architecture, Glutaredoxin spans Met-1–Trp-113. Cys-21 is a [2Fe-2S] cluster binding site.

The protein belongs to the glutaredoxin family. CC-type subfamily.

The protein localises to the cytoplasm. Its function is as follows. May only reduce GSH-thiol disulfides, but not protein disulfides. This Oryza sativa subsp. japonica (Rice) protein is Monothiol glutaredoxin-S8 (GRXS8).